Consider the following 735-residue polypeptide: Catalase-peroxidase (735 aa).

A compositionally biased stretch (polar residues) spans 1 to 10 (MMDGAQTNSG). The disordered stretch occupies residues 1 to 20 (MMDGAQTNSGGCPVMHGGGS). The tryptophyl-tyrosyl-methioninium (Trp-Tyr) (with M-254) cross-link spans 100–228 (WHSAGTYRTY…LAAVQMGLIY (129 aa)). Residue His101 is the Proton acceptor of the active site. The tryptophyl-tyrosyl-methioninium (Tyr-Met) (with W-100) cross-link spans 228–254 (YVNPQGPDGNPDPLASAFDIRDTFARM). His269 contacts heme b.

The protein belongs to the peroxidase family. Peroxidase/catalase subfamily. In terms of assembly, homodimer or homotetramer. The cofactor is heme b. Formation of the three residue Trp-Tyr-Met cross-link is important for the catalase, but not the peroxidase activity of the enzyme.

It carries out the reaction H2O2 + AH2 = A + 2 H2O. The enzyme catalyses 2 H2O2 = O2 + 2 H2O. Functionally, bifunctional enzyme with both catalase and broad-spectrum peroxidase activity. The protein is Catalase-peroxidase of Jannaschia sp. (strain CCS1).